Here is a 410-residue protein sequence, read N- to C-terminus: Chitin deacetylase 3 (410 aa).

Residues M1 to A18 form the signal peptide. The propeptide occupies A19–R39. N-linked (GlcNAc...) asparagine glycans are attached at residues N61 and N80. The region spanning K124–K314 is the NodB homology domain. D131 serves as the catalytic Proton acceptor. D131 contacts acetate. Residue D132 participates in Co(2+) binding. N-linked (GlcNAc...) asparagine glycosylation occurs at N149. Co(2+) is bound by residues H183 and H187. Residue Y225 participates in acetate binding. N-linked (GlcNAc...) asparagine glycosylation is present at N279. H289 serves as the catalytic Proton donor. N293 carries N-linked (GlcNAc...) asparagine glycosylation. S385 carries the GPI-anchor amidated serine lipid modification. The propeptide at S386–V410 is removed in mature form.

This sequence belongs to the polysaccharide deacetylase family. Requires Co(2+) as cofactor.

The protein localises to the cell membrane. It carries out the reaction [(1-&gt;4)-N-acetyl-beta-D-glucosaminyl](n) + n H2O = chitosan + n acetate. Functionally, hydrolyzes the N-acetamido groups of N-acetyl-D-glucosamine residues in chitin to form chitosan and acetate. Chitosan is required to anchor melanin to the cell wall, for maintenance of cell wall integrity, and for proper cytokinesis. Chitosan offers an advantage during infection as it is less readily detected than chitin by host immunosurveillance mechanisms. In Cryptococcus neoformans var. neoformans serotype D (strain JEC21 / ATCC MYA-565) (Filobasidiella neoformans), this protein is Chitin deacetylase 3.